Here is a 617-residue protein sequence, read N- to C-terminus: MSSLPTSDGFNHPARSSGQSPDVGNPMSLARSVSASVCPIKPSDSDRIEPKAVKALKASAEFQLNSEKKEHLSLQDLSDHASSADHAPTDQSPAMPMQNSSEEITVAGNLEKSAERSTQGLKFHLHTRQEASLSVTSTRMHEPQMFLGEKDWHPENQNLSQVSDPQQHEEPGNEQYEVAQQKASHDQEYLCNIGDLELPEERQQNQHKIVDLEATMKGNGLPQNVDPPSAKKSIPSSECSGCSNSETFMEIDTAQQSLVTLLNSTGRQNANVKNIGALDLTLDNPLMEVETSKCNPSSEILNDSISTQDLQPPETNVEIPGTNKEYGHYSSPSLCGSCQPSVESAEESCPSITAALKELHELLVVSSKPASENTSEEVICQSETIAEGQTSIKDLSERWTQNEHLTQNEQCPQVSFHQAISVSVETEKLTGTSSDTGREAVENVNFRSLGDGLSTDKEGVPKSRESINKNRSVTVTSAKTSNQLHCTLGVEISPKLLAGEEDALNQTSEQTKSLSSNFILVKDLGQGIQNSVTDRPETRENVCPDASRPLLEYEPPTSHPSSSPAILPPLIFPATDIDRILRAGFTLQEALGALHRVGGNADLALLVLLAKNIVVPT.

Residues Met1–Asp22 show a composition bias toward polar residues. 3 disordered regions span residues Met1 to Val106, Glu155 to Gln181, and Lys217 to Ser237. 2 stretches are compositionally biased toward basic and acidic residues: residues Ser43–Ala52 and Ser66–Ser83. Polar residues-rich tracts occupy residues Thr89 to Glu103 and Glu155 to Pro165. The involved in post-transcriptional down-regulation of SLC5A1 stretch occupies residues Gln410–Pro412. A UBA domain is found at Ile571–Lys611.

In terms of assembly, interacts with YRDC. As to expression, expressed in small intestine, kidney and brain.

The protein localises to the cell membrane. It localises to the nucleus. The protein resides in the golgi apparatus. Its subcellular location is the trans-Golgi network. Its function is as follows. Mediates transcriptional and post-transcriptional regulation of SLC5A1. Inhibits a dynamin and PKC-dependent exocytotic pathway of SLC5A1. Also involved in transcriptional regulation of SLC22A2. Exhibits glucose-dependent, short-term inhibition of SLC5A1 and SLC22A2 by inhibiting the release of vesicles from the trans-Golgi network. This chain is Regulatory solute carrier protein family 1 member 1 (RSC1A1), found in Homo sapiens (Human).